The primary structure comprises 260 residues: Caveolae-associated protein 3 (260 aa).

The interaction with CAVIN1 stretch occupies residues 1–84 (MGESALESGP…SNTLAQLLAK (84 aa)). The interval 20–78 (VHAVTVVTLLEKLATMLETLRERQGGLAQRQGGLAGSVRRIQSNLGALSRSHDTTSNTL) is leucine-zipper. Phosphoserine occurs at positions 62 and 70. Residue Lys128 forms a Glycyl lysine isopeptide (Lys-Gly) (interchain with G-Cter in SUMO2) linkage. Residues 135–201 (AKAFQKAPEP…SGRKGHAAPT (67 aa)) are interaction with CAV1. The tract at residues 140–260 (KAPEPLGPVE…AAVLQVESAA (121 aa)) is disordered. Positions 157-168 (AEAEESSDEEEP) are enriched in acidic residues. Residues Ser162, Ser163, and Ser171 each carry the phosphoserine modification. Residues 201 to 210 (TPTPVKPPRL) show a composition bias toward pro residues.

It belongs to the CAVIN family. Component of the CAVIN complex composed of CAVIN1, CAVIN2, CAVIN3 and CAVIN4. Interacts with PRKCD and with phosphatidylserine. Phosphatidylserine may form a bridge between PKC and PKC-binding partners and stabilize the binding. Interacts with PER2. Interacts with CAVIN1 and EPS15L1. Interacts (via leucine-zipper domain) with CAV1 in a cholesterol-sensitive manner. Post-translationally, in vitro, phosphorylated by PRKCD.

Its subcellular location is the cytoplasm. It localises to the membrane. The protein localises to the caveola. It is found in the cytosol. Regulates the traffic and/or budding of caveolae. Plays a role in caveola formation in a tissue-specific manner. Required for the formation of caveolae in smooth muscle but not in the lung and heart endothelial cells. Regulates the equilibrium between cell surface-associated and cell surface-dissociated caveolae by promoting the rapid release of caveolae from the cell surface. Plays a role in the regulation of the circadian clock. Modulates the period length and phase of circadian gene expression and also regulates expression and interaction of the core clock components PER1/2 and CRY1/2. In Bos taurus (Bovine), this protein is Caveolae-associated protein 3 (CAVIN3).